A 180-amino-acid chain; its full sequence is Lipid droplet coating protein Cap20 (180 aa).

It belongs to the perilipin family. Interacts with class I hydrophobin Hydr1. Interacts also with the cAMP-dependent protein kinase catalytic subunit PkaC1.

It is found in the lipid droplet. Functionally, lipid droplet coating protein that regulates lipid metabolism, appressorial turgor pressure, and virulence. Mature appressoria with high turgor pressure are essential to penetrate the leaf surface. This Colletotrichum siamense (Anthracnose fungus) protein is Lipid droplet coating protein Cap20.